The chain runs to 414 residues: Argininosuccinate synthase (414 aa).

ATP-binding positions include 9 to 17 (AYSGGLDTS) and A35. L-citrulline-binding residues include Y86 and S91. Position 114-122 (114-122 (SHGATGKGN)) interacts with ATP. L-aspartate-binding residues include T118, N122, and D123. L-citrulline is bound at residue N122. Residues R126, S179, S188, E269, and Y281 each coordinate L-citrulline.

It belongs to the argininosuccinate synthase family. In terms of assembly, homotetramer.

It localises to the cytoplasm. The protein localises to the cytosol. The catalysed reaction is L-citrulline + L-aspartate + ATP = 2-(N(omega)-L-arginino)succinate + AMP + diphosphate + H(+). Its pathway is amino-acid biosynthesis; L-arginine biosynthesis; L-arginine from L-ornithine and carbamoyl phosphate: step 2/3. The protein operates within nitrogen metabolism; urea cycle; (N(omega)-L-arginino)succinate from L-aspartate and L-citrulline: step 1/1. Functionally, one of the enzymes of the urea cycle, the metabolic pathway transforming neurotoxic amonia produced by protein catabolism into inocuous urea in the liver of ureotelic animals. Catalyzes the formation of arginosuccinate from aspartate, citrulline and ATP and together with ASL it is responsible for the biosynthesis of arginine in most body tissues. The protein is Argininosuccinate synthase of Danio rerio (Zebrafish).